We begin with the raw amino-acid sequence, 658 residues long: Probable CoA ligase CCL6 (658 aa).

Residues threonine 226–lysine 234, glutamine 411–threonine 416, aspartate 497, isoleucine 509–arginine 512, and lysine 632 each bind ATP. The tract at residues aspartate 298 to glutamine 411 is SBD1. The tract at residues glycine 412–tyrosine 477 is SBD2.

This sequence belongs to the ATP-dependent AMP-binding enzyme family. As to expression, mostly expressed in glandular trichomes (lupulin glands) after flowering, and, to a lower extent, in stems, leaves, cones and flowers.

Its subcellular location is the cytoplasm. The protein localises to the cytosol. The protein is Probable CoA ligase CCL6 of Humulus lupulus (European hop).